The primary structure comprises 212 residues: External core antigen (212 aa).

The N-terminal stretch at 1–19 (MQLFHLCLIISCSCPTVQA) is a signal peptide. The tract at residues 25–27 (GWL) is HBEAG. A disordered region spans residues 172–212 (LPETTVVRRRGRSPRRRTPSPRRRRSQSPRRRRSQSRESQC). A compositionally biased stretch (basic residues) spans 178 to 205 (VRRRGRSPRRRTPSPRRRRSQSPRRRRS). Residues 184-190 (SPRRRTP) form a 1; half-length repeat. The segment at 184-206 (SPRRRTPSPRRRRSQSPRRRRSQ) is 3 X 8 AA repeats of S-P-R-R-R-R-S-Q. Residues 184–212 (SPRRRTPSPRRRRSQSPRRRRSQSRESQC) constitute a propeptide that is removed on maturation. A run of 2 repeats spans residues 191-198 (SPRRRRSQ) and 199-206 (SPRRRRSQ).

Belongs to the orthohepadnavirus precore antigen family. Homodimerizes. In terms of processing, phosphorylated. Post-translationally, cleaved by host furin.

It localises to the secreted. The protein localises to the host nucleus. May regulate immune response to the intracellular capsid in acting as a T-cell tolerogen, by having an immunoregulatory effect which prevents destruction of infected cells by cytotoxic T-cells. This immune regulation may predispose to chronicity during perinatal infections and prevent severe liver injury during adult infections. The polypeptide is External core antigen (Hepatitis B virus genotype D (isolate Germany/1-91/1991) (HBV-D)).